The chain runs to 437 residues: Major capsid protein (437 aa).

Asn-280, Asn-302, Asn-399, and Asn-406 each carry an N-linked (Glc...) asparagine; by host glycan.

Belongs to the NCLDV major capsid protein family. Post-translationally, myristoylated at the C-terminus. In terms of processing, glycosylated; highly branched oligosaccharides. The pattern of glycosylation sites are unusual.

Its subcellular location is the virion. Functionally, major capsid protein self-assembles to form an icosahedral capsid with a pseudo T=169 symmetry, about 190 nm in diameter, and consisting of 1680 major capsid proteins trimers. The capsid consists in 5040 copies of the major capsid protein (hexamers), 60 copies of the penton protein (pentamers) and 1800 minor capsid proteins of different types. The minor capsid proteins form a hexagonal network below the outer capsid shell, stabilizing the capsid by binding neighboring capsomers together. This chain is Major capsid protein, found in Chlorella (PBCV-1).